A 477-amino-acid polypeptide reads, in one-letter code: Glycogen synthase (477 aa).

Lys15 serves as a coordination point for ADP-alpha-D-glucose.

It belongs to the glycosyltransferase 1 family. Bacterial/plant glycogen synthase subfamily.

The catalysed reaction is [(1-&gt;4)-alpha-D-glucosyl](n) + ADP-alpha-D-glucose = [(1-&gt;4)-alpha-D-glucosyl](n+1) + ADP + H(+). It functions in the pathway glycan biosynthesis; glycogen biosynthesis. Functionally, synthesizes alpha-1,4-glucan chains using ADP-glucose. This is Glycogen synthase from Shigella flexneri.